Consider the following 297-residue polypeptide: Haloalkane dehalogenase (297 aa).

The 102-residue stretch at 47–148 (PPIVLLHGEP…AIARLVVANG (102 aa)) folds into the AB hydrolase-1 domain. Residue Asp-123 is the Nucleophile of the active site. Asp-250 functions as the Proton donor in the catalytic mechanism. The Proton acceptor role is filled by His-279.

This sequence belongs to the haloalkane dehalogenase family. Type 1 subfamily. As to quaternary structure, monomer.

The enzyme catalyses 1-haloalkane + H2O = a halide anion + a primary alcohol + H(+). Catalyzes hydrolytic cleavage of carbon-halogen bonds in halogenated aliphatic compounds, leading to the formation of the corresponding primary alcohols, halide ions and protons. In Mycobacterium marinum (strain ATCC BAA-535 / M), this protein is Haloalkane dehalogenase.